Reading from the N-terminus, the 179-residue chain is MAASSTMLSSVATAACAAPAQASMVAPFVGLKSTSAFPVTQKPATGLSTLPSNGGRVQCMKVWPIVGLKKFETLSYLPTLSVESLLKQIEYLIRNGWVPCLEFSLEGFVSRDNNKSPGYYDGRYWTMWKLPMFGCTDAAQVVKEAAECKKEYPAAFIRVIGFDNVRQVQCVSFIVERPE.

The transit peptide at 1-58 (MAASSTMLSSVATAACAAPAQASMVAPFVGLKSTSAFPVTQKPATGLSTLPSNGGRVQ) directs the protein to the chloroplast.

Belongs to the RuBisCO small chain family. Heterohexadecamer of 8 large and 8 small subunits.

It is found in the plastid. Its subcellular location is the chloroplast. Its function is as follows. RuBisCO catalyzes two reactions: the carboxylation of D-ribulose 1,5-bisphosphate, the primary event in carbon dioxide fixation, as well as the oxidative fragmentation of the pentose substrate. Both reactions occur simultaneously and in competition at the same active site. Although the small subunit is not catalytic it is essential for maximal activity. The sequence is that of Ribulose bisphosphate carboxylase small subunit, chloroplastic 1/4 (RBCS1) from Fritillaria agrestis (Stinkbells).